A 211-amino-acid polypeptide reads, in one-letter code: Ethylene-responsive transcription factor LEP (211 aa).

2 disordered regions span residues 1–21 (MNTT…TRFL) and 74–110 (NFVY…NDPV). The AP2/ERF DNA-binding region spans 19 to 76 (RFLGVRRRPWGRYAAEIRDPTTKERHWLGTFDTAEEAALAYDRAARSMRGTRARTNFV). The span at 81–92 (PPSSSVTSIVSP) shows a compositional bias: low complexity. Residues 93 to 107 (DDPPPPPPPPAPPSN) are compositionally biased toward pro residues.

The protein belongs to the AP2/ERF transcription factor family. ERF subfamily. As to expression, expressed in germinating seeds. Present in young shoots, at low levels, especially in leaf primordia and developing leaf blades. Also detected in vascular tissue, mostly in xylem, of young leaves, petioles and hypocotyls.

It localises to the nucleus. Functionally, cell division-promoting factor involved in leaf blade differentiation, inflorescence branching, as well as in carpel and silique shape. Promotes the number of xylem cells. Positively regulates the gibberellin signaling pathway leading to germination, hypocotyl elongation, and leaf expansion. Probably acts as a transcriptional activator. Binds to the GCC-box pathogenesis-related promoter element. May be involved in the regulation of gene expression by stress factors and by components of stress signal transduction pathways. The sequence is that of Ethylene-responsive transcription factor LEP (LEP) from Arabidopsis thaliana (Mouse-ear cress).